Consider the following 445-residue polypeptide: E3 ubiquitin-protein ligase MYLIP (445 aa).

One can recognise an FERM domain in the interval 1-279; that stretch reads MLCYVTRPDA…ETHAFYRCDT (279 aa). Fe cation contacts are provided by Cys360, Cys363, and Cys368. The segment at 387–422 adopts an RING-type zinc-finger fold; it reads CMVCCEEEINSTFCPCGHTVCCESCAAQLQSCPVCR. A critical for homodimerization region spans residues 431-433; the sequence is VYL.

In terms of assembly, homodimer. Interacts with the E2 ubiquitin-conjugating enzyme, UBE2D1 (via RING-type zinc finger). Interacts with myosin regulatory light chain (MRLC) and TMEM4. In terms of processing, autoubiquitinated. As to expression, ubiquitously expressed.

Its subcellular location is the cytoplasm. It localises to the cell membrane. It carries out the reaction S-ubiquitinyl-[E2 ubiquitin-conjugating enzyme]-L-cysteine + [acceptor protein]-L-lysine = [E2 ubiquitin-conjugating enzyme]-L-cysteine + N(6)-ubiquitinyl-[acceptor protein]-L-lysine.. Its pathway is protein modification; protein ubiquitination. Can bind 1 iron ion per dimer. Iron binding seems to decrease LDLR degradation activity. Functionally, E3 ubiquitin-protein ligase that mediates ubiquitination and subsequent proteasomal degradation of myosin regulatory light chain (MRLC), LDLR, VLDLR and LRP8. Activity depends on E2 enzymes of the UBE2D family. Proteasomal degradation of MRLC leads to inhibit neurite outgrowth in presence of NGF by counteracting the stabilization of MRLC by saposin-like protein (CNPY2/MSAP) and reducing CNPY2-stimulated neurite outgrowth. Acts as a sterol-dependent inhibitor of cellular cholesterol uptake by mediating ubiquitination and subsequent degradation of LDLR. The protein is E3 ubiquitin-protein ligase MYLIP (MYLIP) of Homo sapiens (Human).